Here is a 185-residue protein sequence, read N- to C-terminus: Hypoxanthine/guanine phosphoribosyltransferase (185 aa).

It belongs to the purine/pyrimidine phosphoribosyltransferase family. Archaeal HPRT subfamily. As to quaternary structure, homodimer.

It is found in the cytoplasm. It carries out the reaction IMP + diphosphate = hypoxanthine + 5-phospho-alpha-D-ribose 1-diphosphate. It catalyses the reaction GMP + diphosphate = guanine + 5-phospho-alpha-D-ribose 1-diphosphate. Its pathway is purine metabolism; IMP biosynthesis via salvage pathway; IMP from hypoxanthine: step 1/1. Catalyzes a salvage reaction resulting in the formation of IMP that is energically less costly than de novo synthesis. This is Hypoxanthine/guanine phosphoribosyltransferase (hpt) from Methanococcus maripaludis (strain DSM 14266 / JCM 13030 / NBRC 101832 / S2 / LL).